A 77-amino-acid polypeptide reads, in one-letter code: Vacuolar ATPase assembly integral membrane protein VMA21 (77 aa).

Over 1–8 (MAVDVPTS) the chain is Cytoplasmic. A helical membrane pass occupies residues 9–29 (VIVKLMFFTLAMVSFPVLTFF). At 30 to 41 (VSQQYTSNTLVN) the chain is on the lumenal side. Residues 42 to 62 (GGLAALAANVVLFAYVIMAFS) traverse the membrane as a helical segment. Residues 63-77 (EDVPQSDGKESKKQQ) are Cytoplasmic-facing. A Prevents secretion from ER motif is present at residues 74-77 (KKQQ).

The protein belongs to the VMA21 family.

The protein resides in the endoplasmic reticulum membrane. Its subcellular location is the endoplasmic reticulum-Golgi intermediate compartment membrane. It localises to the cytoplasmic vesicle. The protein localises to the COPII-coated vesicle membrane. Required for the assembly of the V0 complex of the vacuolar ATPase (V-ATPase) in the endoplasmic reticulum. The polypeptide is Vacuolar ATPase assembly integral membrane protein VMA21 (Eremothecium gossypii (strain ATCC 10895 / CBS 109.51 / FGSC 9923 / NRRL Y-1056) (Yeast)).